We begin with the raw amino-acid sequence, 254 residues long: Ribonuclease HII (254 aa).

The RNase H type-2 domain occupies 70 to 254; the sequence is QAIAGIDEVG…TFEPVKSMLG (185 aa). The a divalent metal cation site is built by Asp76, Glu77, and Asp168.

It belongs to the RNase HII family. Mn(2+) serves as cofactor. The cofactor is Mg(2+).

It localises to the cytoplasm. The enzyme catalyses Endonucleolytic cleavage to 5'-phosphomonoester.. Its function is as follows. Endonuclease that specifically degrades the RNA of RNA-DNA hybrids. This Streptococcus gordonii (strain Challis / ATCC 35105 / BCRC 15272 / CH1 / DL1 / V288) protein is Ribonuclease HII.